The chain runs to 73 residues: Serine rich endogenous peptide 1 (73 aa).

The first 28 residues, 1–28 (MGMSGSSGLVHVLMLLLLLSILFHHTES), serve as a signal peptide directing secretion. The tract at residues 48–73 (YKPNTAVETPPSRSRRGGGGQNTGAD) is disordered. An SCOOP motif motif is present at residues 53–67 (AVETPPSRSRRGGGG). The SxS motif essential for MIK2 binding motif lies at 59–61 (SRS). Gly residues predominate over residues 64 to 73 (GGGGQNTGAD).

The protein belongs to the serine rich endogenous peptide (SCOOP) phytocytokine family. As to quaternary structure, interacts with MIK2 (via extracellular leucine-rich repeat domain); this interaction triggers the formation of complex between MIK2 and the BAK1/SERK3 and SERK4 coreceptors, and subsequent BAK1 activation by phosphorylation. Mostly expressed in leaves and flowers, and, to a lower extent, in seedlings shoots.

The protein localises to the cell membrane. The protein resides in the secreted. It is found in the extracellular space. It localises to the apoplast. In terms of biological role, brassicaceae-specific phytocytokine (plant endogenous peptide released into the apoplast) perceived by MIK2 in a BAK1/SERK3 and SERK4 coreceptors-dependent manner, that modulates various physiological and antimicrobial processes including growth prevention and reactive oxygen species (ROS) response regulation. The polypeptide is Serine rich endogenous peptide 1 (Arabidopsis thaliana (Mouse-ear cress)).